The following is a 471-amino-acid chain: uncharacterized protein (471 aa).

The next 4 helical transmembrane spans lie at 10-30, 46-66, 87-107, and 280-300; these read ALWL…LFVI, IDDR…WFAI, TLII…LYFS, and IVVG…LYFA.

The protein belongs to the bacterial sugar transferase family.

It is found in the cell membrane. It functions in the pathway glycan metabolism; exopolysaccharide biosynthesis. May function as a sugar transferase. This is an uncharacterized protein from Haemophilus influenzae (strain ATCC 51907 / DSM 11121 / KW20 / Rd).